A 107-amino-acid chain; its full sequence is U1-lycotoxin-Ls1n (107 aa).

The signal sequence occupies residues 1 to 20 (MMKVLVVVALLVTLISYSSS). A propeptide spanning residues 21-41 (EGIDDLEADELLSLMANEQTR) is cleaved from the precursor. Intrachain disulfides connect Cys-44/Cys-59, Cys-51/Cys-68, Cys-58/Cys-86, and Cys-70/Cys-84.

The protein belongs to the neurotoxin 19 (CSTX) family. 04 (U1-Lctx) subfamily. As to expression, expressed by the venom gland.

The protein localises to the secreted. This is U1-lycotoxin-Ls1n from Lycosa singoriensis (Wolf spider).